The following is a 293-amino-acid chain: Chorion protein S36 (293 aa).

The signal sequence occupies residues 1–20 (MQLGLWFGLFAVAAAPLVSA). Residues 235–253 (QSYGQPQAYNQPQAYSQPQ) show a composition bias toward polar residues. The disordered stretch occupies residues 235 to 293 (QSYGQPQAYNQPQAYSQPQSYGNSGSSGAGNSGPSSDSYAAGAETPLYASPAPYGSPSY).

This sequence belongs to the chorion protein S36 family.

It localises to the secreted. Functionally, chorion membrane (egg shell) protein; protects the egg from the environment. This chain is Chorion protein S36 (Cp36), found in Drosophila virilis (Fruit fly).